A 282-amino-acid polypeptide reads, in one-letter code: 4-hydroxybenzoate octaprenyltransferase (282 aa).

9 helical membrane passes run 17–37 (IGILLLWYPTAWALWMANQGF), 40–60 (IDLLMIFLFGTVFMRSAGCVI), 90–110 (AFILLFILLCASLLLLLKLPI), 113–133 (FYFAVISVLITFLYPFCKRFL), 135–155 (APQLILGLAFSMGIPMAFIAS), 163–183 (FIVLFLINFSWIIAYDTMYAM), 207–227 (LIIALLLIFLHSLWLVWAINK), 231–251 (WFFYLLWCTAAGILTYQLKLI), and 262–282 (AFLVSGYYGLVMWFAVGLALI).

The protein belongs to the UbiA prenyltransferase family. It depends on Mg(2+) as a cofactor.

Its subcellular location is the cell inner membrane. The catalysed reaction is all-trans-octaprenyl diphosphate + 4-hydroxybenzoate = 4-hydroxy-3-(all-trans-octaprenyl)benzoate + diphosphate. It functions in the pathway cofactor biosynthesis; ubiquinone biosynthesis. Catalyzes the prenylation of para-hydroxybenzoate (PHB) with an all-trans polyprenyl group. Mediates the second step in the final reaction sequence of ubiquinone-8 (UQ-8) biosynthesis, which is the condensation of the polyisoprenoid side chain with PHB, generating the first membrane-bound Q intermediate 3-octaprenyl-4-hydroxybenzoate. In Legionella pneumophila (strain Corby), this protein is 4-hydroxybenzoate octaprenyltransferase.